The sequence spans 1043 residues: Isoleucine--tRNA ligase (1043 aa).

A 'HIGH' region motif is present at residues 49–59; it reads PFATGLPHYGH. The 'KMSKS' region motif lies at 592-596; sequence KMSKR. Lysine 595 provides a ligand contact to ATP.

Belongs to the class-I aminoacyl-tRNA synthetase family. IleS type 2 subfamily. As to quaternary structure, monomer. The cofactor is Zn(2+).

The protein resides in the cytoplasm. The enzyme catalyses tRNA(Ile) + L-isoleucine + ATP = L-isoleucyl-tRNA(Ile) + AMP + diphosphate. Functionally, catalyzes the attachment of isoleucine to tRNA(Ile). As IleRS can inadvertently accommodate and process structurally similar amino acids such as valine, to avoid such errors it has two additional distinct tRNA(Ile)-dependent editing activities. One activity is designated as 'pretransfer' editing and involves the hydrolysis of activated Val-AMP. The other activity is designated 'posttransfer' editing and involves deacylation of mischarged Val-tRNA(Ile). The polypeptide is Isoleucine--tRNA ligase (Chlamydia caviae (strain ATCC VR-813 / DSM 19441 / 03DC25 / GPIC) (Chlamydophila caviae)).